The chain runs to 311 residues: Coelenterazine h 2-monooxygenase (311 aa).

The AB hydrolase-1 domain maps to 45–291; the sequence is NAVIFLHGNA…KGLHFSQEDA (247 aa). Substrate is bound by residues aspartate 162 and histidine 285.

Monomer.

The catalysed reaction is coelenterazine h + O2 = excited coelenteramide h monoanion + hnu + CO2 + H(+). Functionally, upon binding the substrate, the enzyme catalyzes an oxygenation, producing a very short-lived hydroperoxide that cyclizes into a dioxetanone structure, which collapses, releasing a CO(2) molecule. The spontaneous breakdown of the dioxetanone releases the energy (about 50 kcal/mole) that is necessary to generate the excited state of the coelenteramide product, which is the singlet form of the monoanion. In vivo the product undergoes the process of nonradiative energy transfer to an accessory protein, a green fluorescent protein (GFP), which results in green bioluminescence. In vitro, in the absence of GFP, the product emits blue light. This chain is Coelenterazine h 2-monooxygenase, found in Renilla reniformis (Sea pansy).